The sequence spans 1433 residues: Probable ATP-dependent RNA helicase spindle-E (1433 aa).

The Helicase ATP-binding domain occupies 126-294 (INAINENPVV…FANERSAPPV (169 aa)). 139 to 146 (GETGCGKT) contacts ATP. The DEAH box motif lies at 240-243 (DEVH). The Helicase C-terminal domain occupies 355–526 (TGKSYNQSLR…NCVLKAKELK (172 aa)). Residues 935-998 (AGAITKGLML…RLMSQDLLRH (64 aa)) enclose the Tudor domain.

Belongs to the DEAD box helicase family. DEAH subfamily.

It localises to the cytoplasm. It carries out the reaction ATP + H2O = ADP + phosphate + H(+). Its function is as follows. Probable ATP-binding RNA helicase which plays a central role during spermatogenesis and oogenesis by repressing transposable elements and preventing their mobilization, which is essential for the germline integrity. Acts via the piRNA metabolic process, which mediates the repression of transposable elements during meiosis by forming complexes composed of piRNAs and Piwi and govern the methylation and subsequent repression of transposons. Involved in the repression of LTR retrotransposon copia. Also involved in telomere regulation by repressing specialized telomeric retroelements HeT-A, TAHRE, and TART; Drosophila telomeres being maintained by transposition of specialized telomeric retroelements. Involved in telomeric trans-silencing, a repression mechanism by which a transposon or a transgene inserted in subtelomeric heterochromatin has the capacity to repress in trans in the female germline, a homologous transposon, or transgene located in euchromatin. Involved in the repression of testis-expressed Stellate genes by the homologous Su(Ste) repeats. Required for anteroposterior and dorsoventral axis formation during oogenesis. This is Probable ATP-dependent RNA helicase spindle-E (spn-E) from Drosophila pseudoobscura pseudoobscura (Fruit fly).